The chain runs to 271 residues: Formamidopyrimidine-DNA glycosylase (271 aa).

P2 functions as the Schiff-base intermediate with DNA in the catalytic mechanism. E3 serves as the catalytic Proton donor. K58 serves as the catalytic Proton donor; for beta-elimination activity. Residues H91, R110, and R152 each coordinate DNA. The FPG-type zinc finger occupies 237–271; sequence RVYGRTGLACMACETPVKQIVQGNRSTYYCPACQR. The active-site Proton donor; for delta-elimination activity is the R261.

This sequence belongs to the FPG family. In terms of assembly, monomer. Zn(2+) serves as cofactor.

It carries out the reaction Hydrolysis of DNA containing ring-opened 7-methylguanine residues, releasing 2,6-diamino-4-hydroxy-5-(N-methyl)formamidopyrimidine.. It catalyses the reaction 2'-deoxyribonucleotide-(2'-deoxyribose 5'-phosphate)-2'-deoxyribonucleotide-DNA = a 3'-end 2'-deoxyribonucleotide-(2,3-dehydro-2,3-deoxyribose 5'-phosphate)-DNA + a 5'-end 5'-phospho-2'-deoxyribonucleoside-DNA + H(+). Involved in base excision repair of DNA damaged by oxidation or by mutagenic agents. Acts as a DNA glycosylase that recognizes and removes damaged bases. Has a preference for oxidized purines, such as 7,8-dihydro-8-oxoguanine (8-oxoG). Has AP (apurinic/apyrimidinic) lyase activity and introduces nicks in the DNA strand. Cleaves the DNA backbone by beta-delta elimination to generate a single-strand break at the site of the removed base with both 3'- and 5'-phosphates. This Thioalkalivibrio sulfidiphilus (strain HL-EbGR7) protein is Formamidopyrimidine-DNA glycosylase.